A 103-amino-acid chain; its full sequence is Large ribosomal subunit protein bL21 (103 aa).

Belongs to the bacterial ribosomal protein bL21 family. Part of the 50S ribosomal subunit. Contacts protein L20.

Its function is as follows. This protein binds to 23S rRNA in the presence of protein L20. The protein is Large ribosomal subunit protein bL21 of Actinobacillus pleuropneumoniae serotype 5b (strain L20).